A 455-amino-acid chain; its full sequence is Argininosuccinate lyase (455 aa).

The protein belongs to the lyase 1 family. Argininosuccinate lyase subfamily.

It is found in the cytoplasm. It catalyses the reaction 2-(N(omega)-L-arginino)succinate = fumarate + L-arginine. It functions in the pathway amino-acid biosynthesis; L-arginine biosynthesis; L-arginine from L-ornithine and carbamoyl phosphate: step 3/3. The polypeptide is Argininosuccinate lyase (Shewanella sp. (strain ANA-3)).